Here is a 1278-residue protein sequence, read N- to C-terminus: ABC transporter B family member 11 (1278 aa).

Composition is skewed to basic and acidic residues over residues 1–13 (MNGD…DSVS) and 21–35 (SPKE…EKSE). Residues 1 to 35 (MNGDGAREGDSVSHEPSTSKSPKEGEETKKEEKSE) form a disordered region. A run of 6 helical transmembrane segments spans residues 55–75 (VLLM…LPFM), 106–126 (FVYL…CWMI), 182–202 (FIQL…KGWL), 205–225 (LVML…ALIV), 285–305 (GLGL…AIWF), and 314–334 (GYTG…SMSL). One can recognise an ABC transmembrane type-1 1 domain in the interval 58-346 (MICGSIGAIG…TSPCVTAFAA (289 aa)). An ABC transporter 1 domain is found at 381 to 617 (IELKDVHFSY…SEGAYSQLIR (237 aa)). ATP is bound at residue 416 to 423 (GESGSGKS). N-linked (GlcNAc...) asparagine glycosylation is found at Asn483, Asn568, and Asn653. Positions 629–654 (ELSSGSSFRNSNLKKSMEGTSSVGNS) are enriched in polar residues. The segment at 629–656 (ELSSGSSFRNSNLKKSMEGTSSVGNSSR) is disordered. The ABC transmembrane type-1 2 domain maps to 710–997 (LLLGTVAAAI…SSTFAPDSSK (288 aa)). The next 2 helical transmembrane spans lie at 711 to 731 (LLGT…GILI) and 751 to 771 (FWAI…PTQM). N-linked (GlcNAc...) asparagine glycosylation is present at Asn806. 4 consecutive transmembrane segments (helical) span residues 824-844 (ALVG…ASGL), 845-865 (IIAF…LPLI), 932-952 (GFIS…VYAT), and 971-991 (VFQV…SSTF). The region spanning 1032–1271 (IELRHLSFTY…EGGVYASLVQ (240 aa)) is the ABC transporter 2 domain. 1067–1074 (GESGSGKS) serves as a coordination point for ATP. Asn1121 and Asn1222 each carry an N-linked (GlcNAc...) asparagine glycan.

The protein belongs to the ABC transporter superfamily. ABCB family. Multidrug resistance exporter (TC 3.A.1.201) subfamily. As to expression, present in roots and flower buds.

The protein localises to the membrane. It catalyses the reaction (indol-3-yl)acetate(in) + ATP + H2O = (indol-3-yl)acetate(out) + ADP + phosphate + H(+). In terms of biological role, involved in the regulation of auxin transport required for pistil elongation. This chain is ABC transporter B family member 11, found in Arabidopsis thaliana (Mouse-ear cress).